The following is a 607-amino-acid chain: ENTH domain-containing protein 1 (607 aa).

One can recognise an ENTH domain in the interval 9-141 (NFVKNYSDAE…MDEPLLCKER (133 aa)). Residues 543–574 (EAKNSISVLLREVKRAIARLHEDLSTVIQELN) adopt a coiled-coil conformation.

The sequence is that of ENTH domain-containing protein 1 (ENTHD1) from Homo sapiens (Human).